A 366-amino-acid polypeptide reads, in one-letter code: Uroporphyrinogen decarboxylase (366 aa).

Residues 28–32 (RQAGR), Asp78, Tyr160, Thr215, and His333 each bind substrate.

Belongs to the uroporphyrinogen decarboxylase family. As to quaternary structure, homodimer.

Its subcellular location is the cytoplasm. It carries out the reaction uroporphyrinogen III + 4 H(+) = coproporphyrinogen III + 4 CO2. It participates in porphyrin-containing compound metabolism; protoporphyrin-IX biosynthesis; coproporphyrinogen-III from 5-aminolevulinate: step 4/4. In terms of biological role, catalyzes the decarboxylation of four acetate groups of uroporphyrinogen-III to yield coproporphyrinogen-III. This Paraburkholderia phytofirmans (strain DSM 17436 / LMG 22146 / PsJN) (Burkholderia phytofirmans) protein is Uroporphyrinogen decarboxylase.